The sequence spans 111 residues: Cell division protein FtsL (111 aa).

Residues 1 to 26 (MAQARTEFSKVAAPRKLEEMYAQRGD) lie on the Cytoplasmic side of the membrane. A helical transmembrane segment spans residues 27–47 (LFPYLLAVLVLLTLVSVFHVW). Over 48–111 (SRVRVVDLNL…PTDQQVVVVK (64 aa)) the chain is Periplasmic. A coiled-coil region spans residues 51–85 (RVVDLNLEVAEVARQLKVAQEEQNRLKLEVASLKT).

It belongs to the FtsL family.

Its subcellular location is the cell inner membrane. Functionally, essential cell division protein. The polypeptide is Cell division protein FtsL (Geobacter sulfurreducens (strain ATCC 51573 / DSM 12127 / PCA)).